The primary structure comprises 437 residues: MANVVVIGAQWGDEGKGKITDLLSRSADVVVRYQGGVNAGHTIVVEDKVLKLHLIPSGILYPDTICLIGSGTVVDPKVMIKEIKMLEDNDIDISGLKLASTAHVTMPYHRLLDLAMEQKRGDQKIGTTGRGIGPTYADKSQRNGIRIIDLMSREKLQERLQVPLSEKNGLLQKIYGIEPLIIDEIIEEYLDYGKQLKKHIVDCNRTIHQAARKKKNILFEGAQGTLLDLDHGTYPYVTSSNPVSGGACIGAGVGPTLIDRVIGVAKAYTTRVGEGPFPTELHGSINDQLCDRGGEFGTTTGRRRRCGWFDGVIGKYAVEVNGLDCLAITKLDVLDELEEIDICVAYELNGKRIDYFPTSVEDFEKCNPIFKKLPGWRCSTENCRRLEDLPPAAMSYLRFLAELMEVPIAIVSLGANRDQTIVIEDPIHGPKRALLNS.

GTP contacts are provided by residues 12 to 18 (GDEGKGK) and 40 to 42 (GHT). The active-site Proton acceptor is the Asp13. Asp13 and Gly40 together coordinate Mg(2+). Residues 13–16 (DEGK), 38–41 (NAGH), Thr128, Arg142, Gln223, Thr238, and Arg302 each bind IMP. Residue His41 is the Proton donor of the active site. Substrate is bound at residue 298 to 304 (TTTGRRR). GTP contacts are provided by residues Arg304, 330-332 (KLD), and 412-414 (SLG).

This sequence belongs to the adenylosuccinate synthetase family. Homodimer. It depends on Mg(2+) as a cofactor.

Its subcellular location is the cytoplasm. It carries out the reaction IMP + L-aspartate + GTP = N(6)-(1,2-dicarboxyethyl)-AMP + GDP + phosphate + 2 H(+). Its pathway is purine metabolism; AMP biosynthesis via de novo pathway; AMP from IMP: step 1/2. Its function is as follows. Plays an important role in the de novo pathway of purine nucleotide biosynthesis. Catalyzes the first committed step in the biosynthesis of AMP from IMP. The chain is Adenylosuccinate synthetase from Prochlorococcus marinus (strain NATL1A).